The primary structure comprises 111 residues: WAP four-disulfide core domain protein 12 (111 aa).

The first 23 residues, 1–23 (MGSSSFLVLMVSLTLVTLVAAEG), serve as a signal peptide directing secretion. Residues 27–74 (GIEKAGVCPADNVRCFKSDPPQCHTDQDCLGERKCCYLHCGFKCVIPV) form the WAP domain. 4 disulfide bridges follow: cysteine 34–cysteine 62, cysteine 41–cysteine 66, cysteine 49–cysteine 61, and cysteine 55–cysteine 70. The tract at residues 80–111 (GGNKDEDVSGPCPEPGWEAKSPGSSSTGCPQK) is disordered. Positions 101–111 (PGSSSTGCPQK) are enriched in polar residues.

The protein localises to the secreted. Antibacterial protein. Putative acid-stable proteinase inhibitor. This Chlorocebus aethiops (Green monkey) protein is WAP four-disulfide core domain protein 12 (WFDC12).